We begin with the raw amino-acid sequence, 395 residues long: F-box/kelch-repeat protein SKIP25 (395 aa).

Residues 1 to 29 (MEKKLKRRESMSTTAAESPPAKRRRTVTG) are disordered. One can recognise an F-box domain in the interval 34 to 79 (ALIEGLPDHISEICLSLVHRPSLLSAVCTRWRRLLYSPEFPSFPSL). 5 Kelch repeats span residues 81 to 129 (ALFV…YRHP), 147 to 194 (LILI…ACDG), 196 to 245 (IYIA…FSRE), 246 to 299 (AIDA…AMEE), and 301 to 342 (ILYS…TQVT).

As to quaternary structure, part of a SCF (ASK-cullin-F-box) protein ligase complex. Interacts with SKP1A/ASK1.

It is found in the nucleus. The protein operates within protein modification; protein ubiquitination. Functionally, component of SCF(ASK-cullin-F-box) E3 ubiquitin ligase complexes, which may mediate the ubiquitination and subsequent proteasomal degradation of target proteins. The chain is F-box/kelch-repeat protein SKIP25 (SKIP25) from Arabidopsis thaliana (Mouse-ear cress).